Consider the following 782-residue polypeptide: E3 ubiquitin-protein ligase SopA (782 aa).

The interval 140–170 (SANNRPTVSEGRTPPVSPSLSLQATSSPSSP) is disordered. The segment covering 157–170 (PSLSLQATSSPSSP) has biased composition (low complexity). Cys-753 functions as the Glycyl thioester intermediate in the catalytic mechanism.

The protein belongs to the SopA E3 ligase family. In terms of processing, ubiquitinated in the presence of host E1 ubiquitin-activating enzyme, E2 ubiquitin-conjugating enzyme and ubiquitin.

It localises to the secreted. Its subcellular location is the host cell. The enzyme catalyses S-ubiquitinyl-[E2 ubiquitin-conjugating enzyme]-L-cysteine + [acceptor protein]-L-lysine = [E2 ubiquitin-conjugating enzyme]-L-cysteine + N(6)-ubiquitinyl-[acceptor protein]-L-lysine.. Effector proteins function to alter host cell physiology and promote bacterial survival in host tissues. This protein is an E3 ubiquitin ligase that interferes with host's ubiquitination pathway. The sequence is that of E3 ubiquitin-protein ligase SopA (sopA) from Salmonella agona (strain SL483).